A 202-amino-acid polypeptide reads, in one-letter code: GTP cyclohydrolase 1 (202 aa).

Residues Cys-90, His-93, and Cys-163 each contribute to the Zn(2+) site.

Belongs to the GTP cyclohydrolase I family. In terms of assembly, toroid-shaped homodecamer, composed of two pentamers of five dimers.

It catalyses the reaction GTP + H2O = 7,8-dihydroneopterin 3'-triphosphate + formate + H(+). It participates in cofactor biosynthesis; 7,8-dihydroneopterin triphosphate biosynthesis; 7,8-dihydroneopterin triphosphate from GTP: step 1/1. This is GTP cyclohydrolase 1 from Mycolicibacterium vanbaalenii (strain DSM 7251 / JCM 13017 / BCRC 16820 / KCTC 9966 / NRRL B-24157 / PYR-1) (Mycobacterium vanbaalenii).